Here is a 400-residue protein sequence, read N- to C-terminus: Carbamoyl phosphate synthase small chain (400 aa).

The segment at 1–199 is CPSase; sequence MSNETNANST…PYVIEAEGEA (199 aa). Residues serine 66, glycine 250, and glycine 252 each contribute to the L-glutamine site. Residues 200-395 enclose the Glutamine amidotransferase type-1 domain; the sequence is RHTVVAYDLG…VALMDEDSEN (196 aa). Cysteine 278 acts as the Nucleophile in catalysis. The L-glutamine site is built by phenylalanine 279, glutamine 282, asparagine 320, glycine 322, and phenylalanine 323. Active-site residues include histidine 368 and glutamate 370.

The protein belongs to the CarA family. In terms of assembly, composed of two chains; the small (or glutamine) chain promotes the hydrolysis of glutamine to ammonia, which is used by the large (or ammonia) chain to synthesize carbamoyl phosphate. Tetramer of heterodimers (alpha,beta)4.

It carries out the reaction hydrogencarbonate + L-glutamine + 2 ATP + H2O = carbamoyl phosphate + L-glutamate + 2 ADP + phosphate + 2 H(+). The enzyme catalyses L-glutamine + H2O = L-glutamate + NH4(+). It participates in amino-acid biosynthesis; L-arginine biosynthesis; carbamoyl phosphate from bicarbonate: step 1/1. Its pathway is pyrimidine metabolism; UMP biosynthesis via de novo pathway; (S)-dihydroorotate from bicarbonate: step 1/3. Functionally, small subunit of the glutamine-dependent carbamoyl phosphate synthetase (CPSase). CPSase catalyzes the formation of carbamoyl phosphate from the ammonia moiety of glutamine, carbonate, and phosphate donated by ATP, constituting the first step of 2 biosynthetic pathways, one leading to arginine and/or urea and the other to pyrimidine nucleotides. The small subunit (glutamine amidotransferase) binds and cleaves glutamine to supply the large subunit with the substrate ammonia. The protein is Carbamoyl phosphate synthase small chain of Corynebacterium efficiens (strain DSM 44549 / YS-314 / AJ 12310 / JCM 11189 / NBRC 100395).